The chain runs to 331 residues: Putative type II secretion system C-type protein YghF (331 aa).

The helical transmembrane segment at 44–60 (MFWLMLLIISAKMAHSL) threads the bilayer.

It belongs to the GSP C family.

The protein resides in the cell inner membrane. Involved in a type II secretion system (T2SS, formerly general secretion pathway, GSP) for the export of folded proteins across the outer membrane. The protein is Putative type II secretion system C-type protein YghF of Escherichia coli (strain K12).